The primary structure comprises 157 residues: Transmembrane protein 50A (157 aa).

Residue serine 2 is modified to N-acetylserine. The residue at position 2 (serine 2) is a Phosphoserine. The next 4 membrane-spanning stretches (helical) occupy residues 26-46 (IAAG…AVMY), 58-78 (TCGV…NGQV), 95-115 (IWLF…MWIL), and 126-146 (VVYP…GGLV).

Belongs to the UPF0220 family.

The protein localises to the membrane. The chain is Transmembrane protein 50A (Tmem50a) from Mus musculus (Mouse).